A 140-amino-acid chain; its full sequence is Gonadotropin subunit beta-2 (140 aa).

Positions 1 to 23 (MGTPVKILVVLFSVIVLLAVAQS) are cleaved as a signal peptide. 6 cysteine pairs are disulfide-bonded: cysteine 29–cysteine 77, cysteine 43–cysteine 92, cysteine 46–cysteine 130, cysteine 54–cysteine 108, cysteine 58–cysteine 110, and cysteine 113–cysteine 120. The N-linked (GlcNAc...) asparagine glycan is linked to asparagine 33.

This sequence belongs to the glycoprotein hormones subunit beta family. As to quaternary structure, heterodimer of an alpha and a beta chain.

It localises to the secreted. Involved in gametogenesis and steroidogenesis. This chain is Gonadotropin subunit beta-2 (cgbb), found in Carassius auratus (Goldfish).